We begin with the raw amino-acid sequence, 833 residues long: DNA gyrase subunit A (833 aa).

One can recognise a Topo IIA-type catalytic domain in the interval 35–498 (LPDVRDGMKP…SEDMFEDEDL (464 aa)). The active-site O-(5'-phospho-DNA)-tyrosine intermediate is tyrosine 123. A GyrA-box motif is present at residues 525–531 (QKRGGRG). The tract at residues 803–833 (RVDIEDDELDEDESIEEERDDRSEVEQGENE) is disordered. Residues 806 to 821 (IEDDELDEDESIEEER) are compositionally biased toward acidic residues.

It belongs to the type II topoisomerase GyrA/ParC subunit family. Heterotetramer, composed of two GyrA and two GyrB chains. In the heterotetramer, GyrA contains the active site tyrosine that forms a transient covalent intermediate with DNA, while GyrB binds cofactors and catalyzes ATP hydrolysis.

The protein localises to the cytoplasm. The catalysed reaction is ATP-dependent breakage, passage and rejoining of double-stranded DNA.. In terms of biological role, a type II topoisomerase that negatively supercoils closed circular double-stranded (ds) DNA in an ATP-dependent manner to modulate DNA topology and maintain chromosomes in an underwound state. Negative supercoiling favors strand separation, and DNA replication, transcription, recombination and repair, all of which involve strand separation. Also able to catalyze the interconversion of other topological isomers of dsDNA rings, including catenanes and knotted rings. Type II topoisomerases break and join 2 DNA strands simultaneously in an ATP-dependent manner. The protein is DNA gyrase subunit A of Halalkalibacterium halodurans (strain ATCC BAA-125 / DSM 18197 / FERM 7344 / JCM 9153 / C-125) (Bacillus halodurans).